A 229-amino-acid chain; its full sequence is Aminopyrimidine aminohydrolase (229 aa).

Residue aspartate 44 coordinates substrate. Cysteine 137 serves as the catalytic Nucleophile. Substrate is bound by residues tyrosine 141 and tyrosine 167. Glutamate 208 acts as the Proton donor in catalysis.

This sequence belongs to the TenA family. As to quaternary structure, homotetramer.

It catalyses the reaction 4-amino-5-aminomethyl-2-methylpyrimidine + H2O = 4-amino-5-hydroxymethyl-2-methylpyrimidine + NH4(+). The catalysed reaction is thiamine + H2O = 5-(2-hydroxyethyl)-4-methylthiazole + 4-amino-5-hydroxymethyl-2-methylpyrimidine + H(+). Its pathway is cofactor biosynthesis; thiamine diphosphate biosynthesis. Its function is as follows. Catalyzes an amino-pyrimidine hydrolysis reaction at the C5' of the pyrimidine moiety of thiamine compounds, a reaction that is part of a thiamine salvage pathway. Thus, catalyzes the conversion of 4-amino-5-aminomethyl-2-methylpyrimidine to 4-amino-5-hydroxymethyl-2-methylpyrimidine (HMP). Is also able to catalyze the hydrolytic cleavage of thiamine; however, this thiaminase activity may not be physiologically relevant. Therefore, is probably involved in the regeneration of the thiamine pyrimidine from thiamine degraded products present in the environment, rather than in thiamine degradation. In Staphylococcus aureus (strain MRSA252), this protein is Aminopyrimidine aminohydrolase.